The following is a 297-amino-acid chain: MYLKLLQSCNRLHPRAWDFIQLMRLDKPIGTYLLLWPTLWALWIAAEGVPSAKNLFIFITGVILMRAAGCVVNDFADRNFDGHVQRTQARPMAAGRVSSREAWTLFAVLVGLSFGLVLLTNATTVYLSFGALALAACYPFMKRYTFYPQVVLGAAFSWGMPMAFTAETGSLPPEAWLLFIANLLWTVAYDTYYAMADRDDDLKIGIKSTAILFGEADRVIIVTLQGLALFCLLLAGVRFELGQWFHLGLVIAAGCFAWEFWKTQSRKPQVCFKAFLHNHWAGLAILAGIVLDYATKA.

Transmembrane regions (helical) follow at residues 29–49 (IGTYLLLWPTLWALWIAAEGV), 55–75 (LFIFITGVILMRAAGCVVNDF), 102–122 (AWTLFAVLVGLSFGLVLLTNA), 124–141 (TVYLSFGALALAACYPFM), 146–166 (FYPQVVLGAAFSWGMPMAFTA), 169–189 (GSLPPEAWLLFIANLLWTVAY), 219–239 (VIIVTLQGLALFCLLLAGVRF), 241–261 (LGQWFHLGLVIAAGCFAWEFW), and 270–290 (VCFKAFLHNHWAGLAILAGIV).

The protein belongs to the UbiA prenyltransferase family. It depends on Mg(2+) as a cofactor.

It localises to the cell inner membrane. It catalyses the reaction all-trans-octaprenyl diphosphate + 4-hydroxybenzoate = 4-hydroxy-3-(all-trans-octaprenyl)benzoate + diphosphate. The protein operates within cofactor biosynthesis; ubiquinone biosynthesis. Functionally, catalyzes the prenylation of para-hydroxybenzoate (PHB) with an all-trans polyprenyl group. Mediates the second step in the final reaction sequence of ubiquinone-8 (UQ-8) biosynthesis, which is the condensation of the polyisoprenoid side chain with PHB, generating the first membrane-bound Q intermediate 3-octaprenyl-4-hydroxybenzoate. This is 4-hydroxybenzoate octaprenyltransferase from Stutzerimonas stutzeri (strain A1501) (Pseudomonas stutzeri).